A 100-amino-acid chain; its full sequence is Small ribosomal subunit protein uS14c (100 aa).

The protein belongs to the universal ribosomal protein uS14 family. In terms of assembly, part of the 30S ribosomal subunit.

The protein localises to the plastid. It localises to the chloroplast. In terms of biological role, binds 16S rRNA, required for the assembly of 30S particles. The chain is Small ribosomal subunit protein uS14c from Rhodomonas salina (Cryptomonas salina).